The chain runs to 182 residues: ATP synthase subunit b 1 (182 aa).

A helical membrane pass occupies residues 24–44; that stretch reads FADPAFWVSIAFLMVVGFVYI.

The protein belongs to the ATPase B chain family. In terms of assembly, F-type ATPases have 2 components, F(1) - the catalytic core - and F(0) - the membrane proton channel. F(1) has five subunits: alpha(3), beta(3), gamma(1), delta(1), epsilon(1). F(0) has three main subunits: a(1), b(2) and c(10-14). The alpha and beta chains form an alternating ring which encloses part of the gamma chain. F(1) is attached to F(0) by a central stalk formed by the gamma and epsilon chains, while a peripheral stalk is formed by the delta and b chains.

The protein resides in the cell inner membrane. In terms of biological role, f(1)F(0) ATP synthase produces ATP from ADP in the presence of a proton or sodium gradient. F-type ATPases consist of two structural domains, F(1) containing the extramembraneous catalytic core and F(0) containing the membrane proton channel, linked together by a central stalk and a peripheral stalk. During catalysis, ATP synthesis in the catalytic domain of F(1) is coupled via a rotary mechanism of the central stalk subunits to proton translocation. Component of the F(0) channel, it forms part of the peripheral stalk, linking F(1) to F(0). The polypeptide is ATP synthase subunit b 1 (Rhodospirillum rubrum (strain ATCC 11170 / ATH 1.1.1 / DSM 467 / LMG 4362 / NCIMB 8255 / S1)).